The following is a 122-amino-acid chain: UPF0102 protein CLH_1204 (122 aa).

This sequence belongs to the UPF0102 family.

The polypeptide is UPF0102 protein CLH_1204 (Clostridium botulinum (strain Alaska E43 / Type E3)).